Here is a 476-residue protein sequence, read N- to C-terminus: CDK5 and ABL1 enzyme substrate 2 (476 aa).

A disordered region spans residues 1-119 (MAAAAAGGAP…GLGLDGQRQR (119 aa)). Residues 30–40 (PRRRGDSRRRQ) are compositionally biased toward basic residues. Over residues 65 to 96 (PAPPPPPPTEAREAPAPPPAPPGGLPGLPARP) the composition is skewed to pro residues. 2 positions are modified to phosphoserine: Ser-128 and Ser-206. The segment at 256 to 295 (DSHGLLPQPRPSIPRAPPGSRHKPVPTKSTPAGTELGSDG) is disordered. Over residues 263 to 272 (QPRPSIPRAP) the composition is skewed to pro residues.

Belongs to the cyclin family. In terms of assembly, binds to CDK3, CDK5 and ABL1. The C-terminal cyclin-box-like region binds to CDK5. As to expression, widely expressed.

In terms of biological role, unknown. Probably involved in G1-S cell cycle transition. This chain is CDK5 and ABL1 enzyme substrate 2 (Cables2), found in Mus musculus (Mouse).